Consider the following 394-residue polypeptide: ATP phosphoribosyltransferase regulatory subunit (394 aa).

It belongs to the class-II aminoacyl-tRNA synthetase family. HisZ subfamily. As to quaternary structure, heteromultimer composed of HisG and HisZ subunits.

The protein localises to the cytoplasm. It participates in amino-acid biosynthesis; L-histidine biosynthesis; L-histidine from 5-phospho-alpha-D-ribose 1-diphosphate: step 1/9. In terms of biological role, required for the first step of histidine biosynthesis. May allow the feedback regulation of ATP phosphoribosyltransferase activity by histidine. This Saccharophagus degradans (strain 2-40 / ATCC 43961 / DSM 17024) protein is ATP phosphoribosyltransferase regulatory subunit.